Consider the following 427-residue polypeptide: Forkhead box protein A1-B (427 aa).

The fork-head DNA-binding region spans 157-251; sequence KPPYSYISLI…ENGCYLRRQK (95 aa). Over residues 256-272 the composition is skewed to basic and acidic residues; sequence EKTQGGKGNQDGRKDHS. Residues 256–336 are disordered; it reads EKTQGGKGNQ…HQNHSTHSLA (81 aa). The span at 285 to 302 shows a compositional bias: low complexity; it reads SSQMDSSSSMSNPSSSPQ. The span at 323-334 shows a compositional bias: polar residues; the sequence is PLSSHQNHSTHS.

Present in the vegetal pole and marginal zone but not the animal pole of gastrulae and in equal levels in the dorsal and ventral halves of both gastrulae and neurulae. At neurula stage, expressed in the notochord. During tailbud stages, expressed in the foregut, brain, hypocord, neural floor plate and in two lines of cells just dorsal and ventral to the notochord. Expressed in the adult liver.

It localises to the nucleus. Its function is as follows. Probable transcription factor. This Xenopus laevis (African clawed frog) protein is Forkhead box protein A1-B (foxa1-b).